A 469-amino-acid chain; its full sequence is DNA-binding transcriptional regulator NtrC (469 aa).

Residues 5–119 (IVWVVDDDSS…EAVALVERAI (115 aa)) enclose the Response regulatory domain. D54 carries the post-translational modification 4-aspartylphosphate. A Sigma-54 factor interaction domain is found at 140-369 (IIGEAPAMQD…LENTCRWLTV (230 aa)). ATP-binding positions include 168–175 (GESGTGKE) and 231–240 (ADGGTLFLDE). Positions 445–464 (KQEAARLLGWGRNTLTRKLK) form a DNA-binding region, H-T-H motif.

In terms of processing, phosphorylated and dephosphorylated by NtrB.

The protein resides in the cytoplasm. Its function is as follows. Member of the two-component regulatory system NtrB/NtrC, which controls expression of the nitrogen-regulated (ntr) genes in response to nitrogen limitation. Phosphorylated NtrC binds directly to DNA and stimulates the formation of open promoter-sigma54-RNA polymerase complexes. This chain is DNA-binding transcriptional regulator NtrC (glnG), found in Escherichia coli O157:H7.